The sequence spans 470 residues: Metalloreductase STEAP4 (470 aa).

NADP(+)-binding positions include 27-30 (TGDF), 49-50 (SR), tyrosine 67, 81-85 (MHREH), asparagine 106, and alanine 139. FAD-binding residues include tryptophan 140 and aspartate 148. Arginine 171 serves as a coordination point for NADP(+). 2 consecutive transmembrane segments (helical) span residues 202-224 (FPFYLSSVLCVFFFVYCAIREVI) and 236-256 (YRLAISIPNRVFPITALILLA). Fe(3+) is bound at residue tyrosine 217. One can recognise a Ferric oxidoreductase domain in the interval 247–395 (FPITALILLA…LGYLTLVLCT (149 aa)). Positions 269 and 290 each coordinate FAD. 2 consecutive transmembrane segments (helical) span residues 293 to 313 (LGLVALGFAFLHVIYTLVIPI) and 342 to 362 (AWINDSYLALGILGFFLFLLL). Residue histidine 304 coordinates heme b. Tyrosine 307 contributes to the Fe(3+) binding site. FAD is bound by residues serine 366 and glutamine 383. Helical transmembrane passes span 381 to 401 (FVQSKLGYLTLVLCTAHTLVY) and 419 to 439 (AYILALVIPCAVLVLKCILIM). Residue histidine 397 coordinates heme b.

Belongs to the STEAP family. Homotrimer. Interacts with PTK2/FAK1; the interaction may regulate PTK2 phosphorylation. FAD serves as cofactor. It depends on heme b as a cofactor. In terms of tissue distribution, expressed in white and brown adipose tissues cells, as well as in muscle and liver cells. Detected in joints and spleens of arthritic mice.

It is found in the cell membrane. The protein resides in the golgi apparatus membrane. It localises to the early endosome membrane. It catalyses the reaction 2 Fe(2+) + NADP(+) + H(+) = 2 Fe(3+) + NADPH. The enzyme catalyses 2 Cu(+) + NADP(+) + H(+) = 2 Cu(2+) + NADPH. Its function is as follows. Integral membrane protein that functions as a NADPH-dependent ferric-chelate reductase, using NADPH from one side of the membrane to reduce a Fe(3+) chelate that is bound on the other side of the membrane. Mediates sequential transmembrane electron transfer from NADPH to FAD and onto heme, and finally to the Fe(3+) chelate. Can also reduce Cu(2+) to Cu(1+). Plays a role in systemic metabolic homeostasis, integrating inflammatory and metabolic responses. Associated with obesity and insulin-resistance. Involved in inflammatory arthritis, through the regulation of inflammatory cytokines. Inhibits anchorage-independent cell proliferation. This chain is Metalloreductase STEAP4 (Steap4), found in Mus musculus (Mouse).